We begin with the raw amino-acid sequence, 110 residues long: U-scoloptoxin(16)-Er7a (110 aa).

A signal peptide spans 1–26 (MTSTRKLSVSCLIVFMVSSLIAVSSG).

The protein belongs to the scoloptoxin-16 family. Post-translationally, contains 4 disulfide bonds. As to expression, expressed by the venom gland.

Its subcellular location is the secreted. This chain is U-scoloptoxin(16)-Er7a, found in Ethmostigmus rubripes (Giant centipede).